The following is a 139-amino-acid chain: Small ribosomal subunit protein bS6 (139 aa).

Residues alanine 95–aspartate 121 show a composition bias toward basic and acidic residues. A disordered region spans residues alanine 95–glutamate 139. Over residues glutamate 124 to glutamate 139 the composition is skewed to acidic residues.

Belongs to the bacterial ribosomal protein bS6 family.

Binds together with bS18 to 16S ribosomal RNA. The chain is Small ribosomal subunit protein bS6 from Pseudomonas aeruginosa (strain LESB58).